The following is a 362-amino-acid chain: Patr class I histocompatibility antigen, B-2 alpha chain (362 aa).

Positions 1–24 are cleaved as a signal peptide; it reads MQVTAPRTVLLLLSAALALTETWA. Residues 25–114 are alpha-1; sequence GSHSMKYFYT…LRGYYNQSEA (90 aa). The Extracellular portion of the chain corresponds to 25–308; the sequence is GSHSMKYFYT…EPSSQSTIPI (284 aa). Residue Asn-110 is glycosylated (N-linked (GlcNAc...) asparagine). An alpha-2 region spans residues 115 to 206; sequence GSHIIQRMYG…ENGKETLQRA (92 aa). 2 disulfides stabilise this stretch: Cys-125–Cys-188 and Cys-227–Cys-283. An alpha-3 region spans residues 207–298; it reads DPPKTHVTHH…GLPKPLTLRW (92 aa). Residues 209-295 form the Ig-like C1-type domain; the sequence is PKTHVTHHPI…QHEGLPKPLT (87 aa). The connecting peptide stretch occupies residues 299–308; sequence EPSSQSTIPI. A helical membrane pass occupies residues 309 to 332; it reads VGIVAGLAVLAVVVIGAVVAAVMC. Topologically, residues 333–362 are cytoplasmic; that stretch reads RRKSSGGKGGSYSQAASSDSAQGSDVSLTA. The interval 336-362 is disordered; sequence SSGGKGGSYSQAASSDSAQGSDVSLTA. The segment covering 343 to 362 has biased composition (low complexity); it reads SYSQAASSDSAQGSDVSLTA.

The protein belongs to the MHC class I family. In terms of assembly, heterodimer of an alpha chain and a beta chain (beta-2-microglobulin).

The protein localises to the membrane. Involved in the presentation of foreign antigens to the immune system. The sequence is that of Patr class I histocompatibility antigen, B-2 alpha chain from Pan troglodytes (Chimpanzee).